Here is a 412-residue protein sequence, read N- to C-terminus: Transforming growth factor beta-3 proprotein (412 aa).

An N-terminal signal peptide occupies residues 1-23 (MKMHLQRALVVLALLNFATVSLS). 3 N-linked (GlcNAc...) asparagine glycosylation sites follow: N74, N135, and N142. The short motif at 261-263 (RGD) is the Cell attachment site element. Q293 carries the N5-methylglutamine modification. Disulfide bonds link C307–C316, C315–C378, C344–C409, and C348–C411.

The protein belongs to the TGF-beta family. Interacts with ASPN. Latency-associated peptide: Homodimer; disulfide-linked. Latency-associated peptide: Interacts with Transforming growth factor beta-3 (TGF-beta-3) chain; interaction is non-covalent and maintains (TGF-beta-3) in a latent state. Latency-associated peptide: Interacts with LRRC32/GARP; leading to regulate activation of TGF-beta-3 and promote epithelial fusion during palate development. Latency-associated peptide: Interacts (via cell attachment site) with integrins, leading to release of the active TGF-beta-3. Transforming growth factor beta-3: Homodimer; disulfide-linked. Transforming growth factor beta-3: Interacts with TGF-beta receptors (TGFBR1 and TGFBR2), leading to signal transduction. Transforming growth factor beta-3 proprotein: The precursor proprotein is cleaved in the Golgi apparatus to form Transforming growth factor beta-3 (TGF-beta-3) and Latency-associated peptide (LAP) chains, which remain non-covalently linked, rendering TGF-beta-3 inactive. In terms of processing, methylated at Gln-293 by N6AMT1.

Its subcellular location is the secreted. The protein resides in the extracellular space. It is found in the extracellular matrix. Functionally, transforming growth factor beta-3 proprotein: Precursor of the Latency-associated peptide (LAP) and Transforming growth factor beta-3 (TGF-beta-3) chains, which constitute the regulatory and active subunit of TGF-beta-3, respectively. In terms of biological role, required to maintain the Transforming growth factor beta-3 (TGF-beta-3) chain in a latent state during storage in extracellular matrix. Associates non-covalently with TGF-beta-3 and regulates its activation via interaction with 'milieu molecules', such as LTBP1 and LRRC32/GARP, that control activation of TGF-beta-3. Interaction with integrins results in distortion of the Latency-associated peptide chain and subsequent release of the active TGF-beta-3. Transforming growth factor beta-3: Multifunctional protein that regulates embryogenesis and cell differentiation and is required in various processes such as secondary palate development. Activation into mature form follows different steps: following cleavage of the proprotein in the Golgi apparatus, Latency-associated peptide (LAP) and Transforming growth factor beta-3 (TGF-beta-3) chains remain non-covalently linked rendering TGF-beta-3 inactive during storage in extracellular matrix. At the same time, LAP chain interacts with 'milieu molecules', such as LTBP1 and LRRC32/GARP that control activation of TGF-beta-3 and maintain it in a latent state during storage in extracellular milieus. TGF-beta-3 is released from LAP by integrins: integrin-binding results in distortion of the LAP chain and subsequent release of the active TGF-beta-3. Once activated following release of LAP, TGF-beta-3 acts by binding to TGF-beta receptors (TGFBR1 and TGFBR2), which transduce signal. This Homo sapiens (Human) protein is Transforming growth factor beta-3 proprotein (TGFB3).